A 781-amino-acid chain; its full sequence is ATP-dependent 6-phosphofructokinase (781 aa).

The N-terminal catalytic PFK domain 1 stretch occupies residues 1-394; it reads MATWMEGKYV…NLATYIKLSK (394 aa). Residues Gly27, 90–91, and 120–123 each bind ATP; these read RC and GDGS. Asp121 lines the Mg(2+) pocket. Substrate-binding positions include 166–168, Arg203, 210–212, Glu266, Arg294, and 300–303; these read SID, MGR, and HVQR. Asp168 functions as the Proton acceptor in the catalytic mechanism. The interdomain linker stretch occupies residues 395-409; the sequence is IEQPRQSVMSSENNL. The interval 410–781 is C-terminal regulatory PFK domain 2; it reads RIGIVNVGAP…ESIMAGTDRK (372 aa). Beta-D-fructose 2,6-bisphosphate is bound by residues Arg479, 537-541, Arg575, 582-584, Asp638, Arg664, 670-673, and Arg745; these read TISNN, MGG, and HMQQ.

The protein belongs to the phosphofructokinase type A (PFKA) family. ATP-dependent PFK group I subfamily. Eukaryotic two domain clade 'E' sub-subfamily. Homotetramer. Requires Mg(2+) as cofactor.

Its subcellular location is the cytoplasm. The catalysed reaction is beta-D-fructose 6-phosphate + ATP = beta-D-fructose 1,6-bisphosphate + ADP + H(+). It functions in the pathway carbohydrate degradation; glycolysis; D-glyceraldehyde 3-phosphate and glycerone phosphate from D-glucose: step 3/4. Allosterically activated by ADP, AMP, or fructose 2,6-bisphosphate, and allosterically inhibited by ATP or citrate. Functionally, catalyzes the phosphorylation of D-fructose 6-phosphate to fructose 1,6-bisphosphate by ATP, the first committing step of glycolysis. This Schistosoma mansoni (Blood fluke) protein is ATP-dependent 6-phosphofructokinase (PFK).